A 1062-amino-acid chain; its full sequence is Platelet-derived growth factor receptor alpha (1062 aa).

A signal peptide spans 1 to 27 (MFPPSSAPLLLPQLEELVVPLHTAFTL). Ig-like C2-type domains lie at 28–96 (TCQG…VYVP), 91–184 (IYVY…VHGW), 190–281 (LHVE…KQIA), 287–381 (SEFM…RTVS), and 389–493 (PAVI…IKLV). Residues 28 to 504 (TCQGEATIAW…NGPHPELTVA (477 aa)) lie on the Extracellular side of the membrane. Cys-29 and Cys-74 are joined by a disulfide. N-linked (GlcNAc...) asparagine glycans are attached at residues Asn-79 and Asn-132. 2 cysteine pairs are disulfide-bonded: Cys-124-Cys-165 and Cys-211-Cys-265. Asn-273, Asn-333, Asn-366, Asn-433, and Asn-444 each carry an N-linked (GlcNAc...) asparagine glycan. A disulfide bond links Cys-410 and Cys-477. Residues 505 to 525 (AAVLVLLVIVIISLIVLVVIW) traverse the membrane as a helical segment. The Cytoplasmic segment spans residues 526–1062 (KQKPRYEIRW…CSDLVEDSFL (537 aa)). A phosphotyrosine; by autocatalysis mark is found at Tyr-548 and Tyr-550. One can recognise a Protein kinase domain in the interval 569-945 (LVLGRILGSG…HYERVNHEFL (377 aa)). Residues 575–583 (LGSGAFGKV) and Lys-603 contribute to the ATP site. 5 positions are modified to phosphotyrosine; by autocatalysis: Tyr-697, Tyr-708, Tyr-719, Tyr-731, and Tyr-739. A disordered region spans residues 734-754 (LQGSNYDHPPSQKGSNDGEMD). Residue Asp-793 is the Proton acceptor of the active site. Phosphotyrosine; by autocatalysis is present on residues Tyr-824 and Tyr-963. A compositionally biased stretch (basic and acidic residues) spans 975–986 (KDRESGFDEQRL). The segment at 975–1034 (KDRESGFDEQRLSSDSGYIIPLPDLDPISDEEYGKRNRHSSQTSEESAIETGSSSSTFAK) is disordered. Position 992 is a phosphotyrosine; by autocatalysis (Tyr-992). The segment covering 1014 to 1032 (SSQTSEESAIETGSSSSTF) has biased composition (polar residues).

Belongs to the protein kinase superfamily. Tyr protein kinase family. CSF-1/PDGF receptor subfamily. In terms of assembly, interacts with homodimeric pdgfa, pdgfb and pdgfc, and with heterodimers formed by pdgfa and pdgfb. monomer in the absence of bound ligand. Interaction with dimeric pdgfa, pdgfb and/or pdgfc leads to receptor dimerization, where both pdgfra homodimers and heterodimers with pdgfrb are observed. In terms of processing, ubiquitinated, leading to its degradation. Post-translationally, autophosphorylated on tyrosine residues upon ligand binding. Autophosphorylation occurs in trans, i.e. one subunit of the dimeric receptor phosphorylates tyrosine residues on the other subunit.

The protein localises to the cell membrane. It catalyses the reaction L-tyrosyl-[protein] + ATP = O-phospho-L-tyrosyl-[protein] + ADP + H(+). Its activity is regulated as follows. Present in an inactive conformation in the absence of bound ligand. Binding of pdgfa and/or pdgfb leads to dimerization and activation by autophosphorylation on tyrosine residues. In terms of biological role, tyrosine-protein kinase that acts as a cell-surface receptor for pdgfa, pdgfb and pdgfc and plays an essential role in the regulation of embryonic development, cell proliferation, survival and chemotaxis. Depending on the context, promotes or inhibits cell proliferation and cell migration. Plays an important role in the differentiation of bone marrow-derived mesenchymal stem cells. Required for normal skeleton development. Required for normal development of the gastrointestinal tract. Plays a role in cell migration and chemotaxis in wound healing. Plays a role in platelet activation, secretion of agonists from platelet granules, and in thrombin-induced platelet aggregation. Binding of its cognate ligands - homodimeric pdgfa, homodimeric pdgfb, heterodimers formed by pdgfa and pdgfb or homodimeric pdgfc -leads to the activation of several signaling cascades; the response depends on the nature of the bound ligand and is modulated by the formation of heterodimers between pdgfra and pdgfrb. Phosphorylates pik3r1, plcg1, and ptpn11. Activation of plcg1 leads to the production of the cellular signaling molecules diacylglycerol and inositol 1,4,5-trisphosphate, mobilization of cytosolic Ca(2+) and the activation of protein kinase C. Phosphorylates pik3r1, the regulatory subunit of phosphatidylinositol 3-kinase, and thereby mediates activation of the AKT1 signaling pathway. Mediates activation of hras and of the MAP kinases mapk1/erk2 and/or mapk3/erk1. Promotes activation of STAT family members stat1, stat3 and stat5a and/or stat5b. Receptor signaling is down-regulated by protein phosphatases that dephosphorylate the receptor and its down-stream effectors, and by rapid internalization of the activated receptor. This Takifugu rubripes (Japanese pufferfish) protein is Platelet-derived growth factor receptor alpha (pdgfra).